The sequence spans 184 residues: Protein GrpE (184 aa).

Belongs to the GrpE family. Homodimer.

The protein resides in the cytoplasm. Functionally, participates actively in the response to hyperosmotic and heat shock by preventing the aggregation of stress-denatured proteins, in association with DnaK and GrpE. It is the nucleotide exchange factor for DnaK and may function as a thermosensor. Unfolded proteins bind initially to DnaJ; upon interaction with the DnaJ-bound protein, DnaK hydrolyzes its bound ATP, resulting in the formation of a stable complex. GrpE releases ADP from DnaK; ATP binding to DnaK triggers the release of the substrate protein, thus completing the reaction cycle. Several rounds of ATP-dependent interactions between DnaJ, DnaK and GrpE are required for fully efficient folding. This Pseudomonas putida (strain GB-1) protein is Protein GrpE.